The following is a 520-amino-acid chain: Cyclin-L2 (520 aa).

Cyclin-like stretches follow at residues 81–183 (ELIQ…RVLK) and 196–280 (KIIV…KILQ). A disordered region spans residues 309–520 (RAKGLLPPGS…DHPGHSRHRR (212 aa)). Serine 330, serine 337, serine 347, and serine 350 each carry phosphoserine. Over residues 356-366 (RKMEGPKKAKG) the composition is skewed to basic and acidic residues. Serine 368 carries the post-translational modification Phosphoserine. The interval 384–422 (RSREQSYSRSPSRSASPKRRKSDSGSTSGGSKSQSRSRS) is RS. Residues 407–429 (SGSTSGGSKSQSRSRSRSDSPPR) show a composition bias toward low complexity. Positions 440 to 453 (SEVRGSRKSKDCKH) are enriched in basic and acidic residues. Residues 454-471 (LTQKPHKSRSRSSSRSRS) are compositionally biased toward basic residues. 2 stretches are compositionally biased toward basic and acidic residues: residues 472 to 481 (RSRERTDSSG) and 489 to 514 (YYRDQRRERSRSYERTGHRYERDHPG).

It belongs to the cyclin family. Cyclin L subfamily. Interacts with CDK11A, CDK11B, CDK12, CDK13 and POLR2A, the hyperphosphorylated C-terminal domain (CTD) of RNA polymerase II. May form a ternary complex with CDK11B and casein kinase II (CKII). Interacts with pre-mRNA-splicing factors, including at least SRSF1, SRSF2 and SRSF7/SLU7.

It is found in the nucleus speckle. The protein resides in the nucleus. Its subcellular location is the nucleoplasm. Functionally, involved in pre-mRNA splicing. May induce cell death, possibly by acting on the transcription and RNA processing of apoptosis-related factors. This Rattus norvegicus (Rat) protein is Cyclin-L2 (Ccnl2).